The primary structure comprises 1060 residues: Probable serine/threonine-protein kinase MARK-A (1060 aa).

Basic and acidic residues-rich tracts occupy residues 1–11 (METLKEEEQFR) and 23–37 (HLKE…EREQ). 2 disordered regions span residues 1–52 (METL…LQLQ) and 67–88 (NKIP…SISV). 2 stretches are compositionally biased toward low complexity: residues 38–52 (QQQQ…LQLQ) and 68–88 (KIPS…SISV). Positions 109–361 (YLVIKTIGRG…MEEIINHPWL (253 aa)) constitute a Protein kinase domain. ATP-binding positions include 115-123 (IGRGQFGKV) and lysine 139. The Proton acceptor role is filled by aspartate 232. Residues 409–475 (INNINNTMAT…TTTTNATTTT (67 aa)) show a composition bias toward low complexity. 4 disordered regions span residues 409-488 (INNI…NNEE), 560-701 (GENS…SPLC), 714-886 (LREK…PVHS), and 899-966 (DDKS…QEPR). In terms of domain architecture, UBA spans 488–528 (ELDQEIIEELVGLGFEREELCNSIRQNKYNDAASTYFLLQG). The span at 577–594 (TVDSPKSTNTPQYRSSNT) shows a compositional bias: polar residues. Composition is skewed to low complexity over residues 603 to 613 (QQQQQQQQQQQ), 620 to 637 (QQQN…NNHN), 650 to 699 (STTV…NPSP), and 720 to 760 (TTTN…TSPN). The span at 761–770 (LQPFSLASTA) shows a compositional bias: polar residues. 2 stretches are compositionally biased toward low complexity: residues 771–799 (NNNN…SLNS) and 811–831 (QQQQ…NSSS). The segment covering 837 to 846 (QRQESRKLED) has biased composition (basic and acidic residues). 2 stretches are compositionally biased toward low complexity: residues 904–926 (NSSS…TNNT) and 935–965 (QNSN…QQEP). Residues 1008-1057 (IECETEGVRFSIEICRLPRLSVNGLKFKRIGGSSWRYKSICKDLLSQMKL) form the KA1 domain.

This sequence belongs to the protein kinase superfamily. CAMK Ser/Thr protein kinase family. SNF1 subfamily.

The enzyme catalyses L-seryl-[protein] + ATP = O-phospho-L-seryl-[protein] + ADP + H(+). It carries out the reaction L-threonyl-[protein] + ATP = O-phospho-L-threonyl-[protein] + ADP + H(+). The chain is Probable serine/threonine-protein kinase MARK-A (mrkA) from Dictyostelium discoideum (Social amoeba).